Reading from the N-terminus, the 432-residue chain is Killer cell immunoglobulin-like receptor 3DL1 (432 aa).

Positions M1 to A21 are cleaved as a signal peptide. Residues H22–N335 are Extracellular-facing. Ig-like C2-type domains lie at G42 to Y100, G135 to Y202, and G238 to A301. N44 carries an N-linked (GlcNAc...) asparagine glycan. Cysteines 49 and 95 form a disulfide. N137 carries N-linked (GlcNAc...) asparagine glycosylation. 2 cysteine pairs are disulfide-bonded: C142/C195 and C245/C294. N300 carries N-linked (GlcNAc...) asparagine glycosylation. Residues L336–S356 traverse the membrane as a helical segment. Residues C357–K432 lie on the Cytoplasmic side of the membrane.

It belongs to the immunoglobulin superfamily.

It localises to the cell membrane. In terms of biological role, receptor on natural killer (NK) cells. Inhibits the activity of NK cells thus preventing cell lysis. The sequence is that of Killer cell immunoglobulin-like receptor 3DL1 (Kir3dl1) from Mus musculus (Mouse).